Reading from the N-terminus, the 365-residue chain is Fucose-specific lectin (365 aa).

The signal sequence occupies residues 1 to 21; it reads MKLLHFTILLQVSLFPASSLA. A run of 6 repeats spans residues 22–79, 80–141, 142–206, 207–261, 262–309, and 310–365. A 6 X approximate tandem repeats region spans residues 22–365; it reads QAGGNNTEVQ…RRGILAIPPA (344 aa). N-linked (GlcNAc...) asparagine glycosylation is present at Asn-26. 3 residues coordinate beta-L-fucose: Arg-51, Glu-63, and Trp-70. Residues Asn-76 and Asn-85 are each glycosylated (N-linked (GlcNAc...) asparagine). Beta-L-fucose is bound at residue Arg-111. N-linked (GlcNAc...) asparagine glycosylation is present at Asn-118. Residues Glu-123, Trp-132, Arg-164, Glu-176, Trp-201, and Arg-231 each contribute to the beta-L-fucose site. Asn-248 is a glycosylation site (N-linked (GlcNAc...) asparagine). Beta-L-fucose is bound by residues Arg-283, Arg-333, and Glu-347.

This sequence belongs to the fungal fucose-specific lectin family. Homodimer.

The protein localises to the secreted. In terms of biological role, probable L-fucose-binding lectin. The sequence is that of Fucose-specific lectin from Arthroderma benhamiae (strain ATCC MYA-4681 / CBS 112371) (Trichophyton mentagrophytes).